A 320-amino-acid polypeptide reads, in one-letter code: uncharacterized protein (320 aa).

The signal sequence occupies residues 1 to 23 (MKLNLRFPSYFLPVVAASAFLVS). Residue C24 is the site of N-palmitoyl cysteine attachment. C24 is lipidated: S-diacylglycerol cysteine. Residues 160–181 (KNHEHGHTHKNGETHEHDHDHH) are disordered.

It is found in the cell membrane. This is an uncharacterized protein from Mycoplasma pneumoniae (strain ATCC 29342 / M129 / Subtype 1) (Mycoplasmoides pneumoniae).